The primary structure comprises 100 residues: Urease subunit gamma (100 aa).

It belongs to the urease gamma subunit family. In terms of assembly, heterotrimer of UreA (gamma), UreB (beta) and UreC (alpha) subunits. Three heterotrimers associate to form the active enzyme.

It is found in the cytoplasm. It carries out the reaction urea + 2 H2O + H(+) = hydrogencarbonate + 2 NH4(+). It functions in the pathway nitrogen metabolism; urea degradation; CO(2) and NH(3) from urea (urease route): step 1/1. The chain is Urease subunit gamma from Cupriavidus necator (strain ATCC 17699 / DSM 428 / KCTC 22496 / NCIMB 10442 / H16 / Stanier 337) (Ralstonia eutropha).